Here is a 197-residue protein sequence, read N- to C-terminus: Holliday junction branch migration complex subunit RuvA (197 aa).

Residues 1-64 form a domain I region; the sequence is MYEYIKGKYI…EDFIGIYGFL (64 aa). A domain II region spans residues 65–143; the sequence is TKDELSMFKL…IDISEEDDEQ (79 aa). Residues 144–148 are flexible linker; it reads IINKV. The interval 149-197 is domain III; that stretch reads TDDKKVLEAVAALVTLGYSEKEASKVINLCDKNNSLEQIIKEALKHLMK.

Belongs to the RuvA family. In terms of assembly, homotetramer. Forms an RuvA(8)-RuvB(12)-Holliday junction (HJ) complex. HJ DNA is sandwiched between 2 RuvA tetramers; dsDNA enters through RuvA and exits via RuvB. An RuvB hexamer assembles on each DNA strand where it exits the tetramer. Each RuvB hexamer is contacted by two RuvA subunits (via domain III) on 2 adjacent RuvB subunits; this complex drives branch migration. In the full resolvosome a probable DNA-RuvA(4)-RuvB(12)-RuvC(2) complex forms which resolves the HJ.

The protein localises to the cytoplasm. In terms of biological role, the RuvA-RuvB-RuvC complex processes Holliday junction (HJ) DNA during genetic recombination and DNA repair, while the RuvA-RuvB complex plays an important role in the rescue of blocked DNA replication forks via replication fork reversal (RFR). RuvA specifically binds to HJ cruciform DNA, conferring on it an open structure. The RuvB hexamer acts as an ATP-dependent pump, pulling dsDNA into and through the RuvAB complex. HJ branch migration allows RuvC to scan DNA until it finds its consensus sequence, where it cleaves and resolves the cruciform DNA. The chain is Holliday junction branch migration complex subunit RuvA from Clostridium botulinum (strain Loch Maree / Type A3).